The chain runs to 404 residues: Phosphopentomutase (404 aa).

Mn(2+)-binding residues include Asp-10, Asp-303, His-308, Asp-344, His-345, and His-356.

This sequence belongs to the phosphopentomutase family. Requires Mn(2+) as cofactor.

Its subcellular location is the cytoplasm. The catalysed reaction is 2-deoxy-alpha-D-ribose 1-phosphate = 2-deoxy-D-ribose 5-phosphate. It catalyses the reaction alpha-D-ribose 1-phosphate = D-ribose 5-phosphate. Its pathway is carbohydrate degradation; 2-deoxy-D-ribose 1-phosphate degradation; D-glyceraldehyde 3-phosphate and acetaldehyde from 2-deoxy-alpha-D-ribose 1-phosphate: step 1/2. In terms of biological role, isomerase that catalyzes the conversion of deoxy-ribose 1-phosphate (dRib-1-P) and ribose 1-phosphate (Rib-1-P) to deoxy-ribose 5-phosphate (dRib-5-P) and ribose 5-phosphate (Rib-5-P), respectively. This chain is Phosphopentomutase, found in Shewanella baltica (strain OS185).